The chain runs to 242 residues: Uridylate kinase (242 aa).

ATP is bound at residue 17–20; sequence KLGG. G58 contacts UMP. ATP contacts are provided by G59 and R63. Residues D78 and 139-146 each bind UMP; that span reads MGMPYFST. Positions 172 and 175 each coordinate ATP.

It belongs to the UMP kinase family. Homohexamer.

The protein localises to the cytoplasm. It catalyses the reaction UMP + ATP = UDP + ADP. It participates in pyrimidine metabolism; CTP biosynthesis via de novo pathway; UDP from UMP (UMPK route): step 1/1. With respect to regulation, inhibited by UTP. In terms of biological role, catalyzes the reversible phosphorylation of UMP to UDP. This Rhodococcus jostii (strain RHA1) protein is Uridylate kinase.